The sequence spans 144 residues: Benzoylsuccinyl-CoA thiolase subunit BbsA (144 aa).

4 residues coordinate Zn(2+): cysteine 40, cysteine 43, cysteine 54, and cysteine 57.

Belongs to the BbsA family. In terms of assembly, heterotetramer composed of two BbsA subunits and two BbsB subunits. BbsA forms homodimeric subcomplexes. Both BbsA and BbsB are essential for enzymatic activity.

It catalyses the reaction (S)-2-benzoylsuccinyl-CoA + CoA = benzoyl-CoA + succinyl-CoA. It functions in the pathway xenobiotic degradation; toluene degradation. Its function is as follows. Component of the BbsAB thiolase complex, which catalyzes the thiolytic cleavage of (S)-2-benzoylsuccinyl-CoA to succinyl-CoA and benzoyl-CoA, the final step of anaerobic toluene metabolism. The BbsA subunit critically contributes to an induced-fit process for productive binding of a CoA substrate into the active site of BbsB. The polypeptide is Benzoylsuccinyl-CoA thiolase subunit BbsA (Thauera aromatica).